The primary structure comprises 194 residues: Imidazoleglycerol-phosphate dehydratase (194 aa).

Belongs to the imidazoleglycerol-phosphate dehydratase family.

The protein localises to the cytoplasm. The enzyme catalyses D-erythro-1-(imidazol-4-yl)glycerol 3-phosphate = 3-(imidazol-4-yl)-2-oxopropyl phosphate + H2O. Its pathway is amino-acid biosynthesis; L-histidine biosynthesis; L-histidine from 5-phospho-alpha-D-ribose 1-diphosphate: step 6/9. The sequence is that of Imidazoleglycerol-phosphate dehydratase from Bacillus velezensis (strain DSM 23117 / BGSC 10A6 / LMG 26770 / FZB42) (Bacillus amyloliquefaciens subsp. plantarum).